Consider the following 384-residue polypeptide: GDP/UDP-N,N'-diacetylbacillosamine 2-epimerase (hydrolyzing) (384 aa).

It belongs to the UDP-N-acetylglucosamine 2-epimerase family.

The catalysed reaction is GDP-N,N'-diacetylbacillosamine + H2O = 2,4-diacetamido-2,4,6-trideoxy-alpha-D-mannopyranose + GDP + H(+). It carries out the reaction UDP-N,N'-diacetylbacillosamine + H2O = 2,4-diacetamido-2,4,6-trideoxy-alpha-D-mannopyranose + UDP + H(+). Functionally, involved in biosynthesis of legionaminic acid (5,7-diamino-3,5,7,9-tetradeoxy-D-glycero-D-galacto-non-2-ulosonic acid)(Leg), a sialic acid-like derivative that is incorporated into flagellin via O-linkage to Ser/Thr. Catalyzes the conversion of GDP-N,N'-diacetylbacillosamine (Bac2Ac4Ac) into 2,4-diacetamido-2,4,6-trideoxymannose and GDP. It can also use UDP-N,N'-diacetylbacillosamine however it generates small quantities of 2,4-diacetamido-2,4,6-trideoxymannose. The chain is GDP/UDP-N,N'-diacetylbacillosamine 2-epimerase (hydrolyzing) (legG) from Campylobacter jejuni subsp. jejuni serotype O:2 (strain ATCC 700819 / NCTC 11168).